The following is a 407-amino-acid chain: Rubber oxygenase (407 aa).

Residues 1 to 30 (MDGFSRRRMLMTGGALGAVGALGAATRALA) constitute a signal peptide (tat-type signal). His198 is a heme binding site.

This sequence belongs to the rubber oxygenase Lcp family. It depends on heme b as a cofactor. In terms of processing, exported by the Tat system. The position of the signal peptide cleavage has not been experimentally proven.

The protein resides in the secreted. It participates in biopolymer metabolism. Functionally, involved in the initial step of rubber degradation. Catalyzes the oxidative C-C cleavage of poly(cis-1,4-isoprene) in synthetic as well as in natural rubber by the addition of oxygen (O2) to the double bonds, leading to a mixture of oligonucleotide-isoprenoids with terminal keto and aldehyde groups (endo-type cleavage). The cleavage products are of different lengths, ranging from C20 (four isoprene units) to higher oligo-isoprenoids. Is not able to cleave low-molecular-weight substrate analogs with isoprenoid structure such as squalene (1,4-trans-isoprenoid), carotenoids, or alpha-tocopherol. The chain is Rubber oxygenase from Streptomyces sp. (strain K30).